The primary structure comprises 545 residues: GMP synthase [glutamine-hydrolyzing] (545 aa).

Residues 17 to 211 form the Glutamine amidotransferase type-1 domain; that stretch reads TVLVLDMGSQ…ATKICGARPD (195 aa). Residue cysteine 93 is the Nucleophile of the active site. Catalysis depends on residues histidine 185 and glutamate 187. The GMPS ATP-PPase domain maps to 212 to 420; the sequence is WKMDDFSARE…LGIHEELIGR (209 aa). Residue 240-246 participates in ATP binding; that stretch reads SGGVDST. Positions 313, 482, 537, and 543 each coordinate XMP.

As to quaternary structure, homodimer. It depends on Mg(2+) as a cofactor.

The protein resides in the cytoplasm. Its subcellular location is the cytosol. It catalyses the reaction XMP + L-glutamine + ATP + H2O = GMP + L-glutamate + AMP + diphosphate + 2 H(+). It participates in purine metabolism; GMP biosynthesis; GMP from XMP (L-Gln route): step 1/1. Catalyzes the conversion of xanthine monophosphate (XMP) to GMP in the presence of glutamine and ATP through an adenyl-XMP intermediate. This chain is GMP synthase [glutamine-hydrolyzing] (GUA1), found in Gibberella zeae (strain ATCC MYA-4620 / CBS 123657 / FGSC 9075 / NRRL 31084 / PH-1) (Wheat head blight fungus).